Here is a 396-residue protein sequence, read N- to C-terminus: Cathepsin E (396 aa).

Positions 1–19 (MKTLPLLLLLLLDLGQAQG) are cleaved as a signal peptide. A propeptide spans 20-53 (TLDRVPLRRQPSLRKKLRAQGQLSEFWKAHKVDM) (activation peptide). In terms of domain architecture, Peptidase A1 spans 78–392 (YFGTISIGSP…DRGSNRVGLA (315 aa)). The N-linked (GlcNAc...) asparagine glycan is linked to asparagine 90. Aspartate 96 is a catalytic residue. 2 disulfides stabilise this stretch: cysteine 109–cysteine 114 and cysteine 272–cysteine 276. The active site involves aspartate 281. Cysteines 314 and 351 form a disulfide.

This sequence belongs to the peptidase A1 family. In terms of assembly, homodimer; disulfide-linked. In terms of processing, glycosylated. The nature of the carbohydrate chain varies between cell types.

It localises to the endosome. It carries out the reaction Similar to cathepsin D, but slightly broader specificity.. Its function is as follows. May have a role in immune function. Probably involved in the processing of antigenic peptides during MHC class II-mediated antigen presentation. May play a role in activation-induced lymphocyte depletion in the thymus, and in neuronal degeneration and glial cell activation in the brain. In Oryctolagus cuniculus (Rabbit), this protein is Cathepsin E (CTSE).